The primary structure comprises 174 residues: Magnetosome protein MamT (174 aa).

Residues methionine 1–arginine 9 lie on the Cytoplasmic side of the membrane. Residues tryptophan 10–tryptophan 28 traverse the membrane as a helical segment. Residues aspartate 29–leucine 174 lie on the Lumenal side of the membrane. An MCR (magnetochrome) 1 motif is present at residues valine 87 to methionine 107. Residues cysteine 101, cysteine 104, histidine 105, cysteine 152, cysteine 155, and histidine 156 each contribute to the heme site. Residues isoleucine 138 to isoleucine 158 carry the MCR 2 motif.

This sequence belongs to the magnetosome MamT family. Heme is required as a cofactor.

It is found in the magnetosome membrane. May play a role in magnetite crystal maturation. May transfer electrons to balance the Fe(2+)-Fe(3+) ratio during magnetite formation. This chain is Magnetosome protein MamT, found in Magnetospirillum gryphiswaldense (strain DSM 6361 / JCM 21280 / NBRC 15271 / MSR-1).